The sequence spans 355 residues: Putative early 40.3 kDa protein (355 aa).

This protein is required for viral late gene expression. This chain is Putative early 40.3 kDa protein (DA41), found in Orgyia pseudotsugata multicapsid polyhedrosis virus (OpMNPV).